We begin with the raw amino-acid sequence, 121 residues long: RING-box protein HRT1 (121 aa).

Residues 1-31 (MSNEVDRMDVDEDESQNIAQSSNQSAPVETK) form a disordered region. Ser-15 bears the Phosphoserine mark. Positions 16-26 (QNIAQSSNQSA) are enriched in low complexity. Residues Cys-55, Cys-58, Cys-66, Cys-69, Cys-81, Cys-88, His-90, His-93, His-95, Cys-107, and Asp-110 each contribute to the Zn(2+) site. Residues 55–111 (CAICRNHIMEPCIECQPKAMTDTDNECVAAWGVCNHAFHLHCINKWIKTRDACPLDN) form an RING-type zinc finger.

The protein belongs to the RING-box family. As to quaternary structure, component of multiple cullin-RING ligases (CRLs) composed of 4 subunits: the RING protein HRT1, a cullin, a linker protein, and one of many alternative substrate receptors. Component of SCF E3 ubiquitin ligase complexes containing the cullin CDC53, the linker protein SKP1/CBF3D, and substrate receptors containing F-box motifs like DAS1 or GRR1. Component of RTT101(MMS1) E3 ubiquitin ligase complexes containing the cullin RTT101, the linker protein MMS1, and substrate receptors belonging to a protein family described as DCAF (DDB1- and CUL4-associated factor) like MMS22. Component of CRL3 E3 ubiquitin ligase complexes containing the cullin CUL3, the linker protein ELC1, and substrate receptors containing SOCS-box motifs like ELA1. Interacts with CDC53, CUL3, RTT101, CDC4 and CDC34/UBC3.

Its subcellular location is the cytoplasm. The protein resides in the nucleus. It participates in protein modification; protein ubiquitination. Functionally, core component of multiple cullin-RING-based E3 ubiquitin-protein ligase complexes (CRLs), which mediate the ubiquitination of target proteins. Recruits the E2 ubiquitin-conjugating enzyme CDC34/UBC3 to the complex and brings it into close proximity to the substrate. Also stimulates CDC34/UBC3 autoubiquitination and promotes the neddylation of CDC53 and RTT101. Component of the SCF(CDC4) ubiquitin ligase required for ubiquitination of the cyclin-dependent kinase inhibitor SIC1 and for the G1-to-S phase transition. Component of the RTT101(MMS1-MMS22) ubiquitin ligase that promotes fork progression through damaged DNA or natural pause sites. Component of the CRL3(ELA1) ubiquitin ligase required for ubiquitination of RPB1, the largest subunit of RNA polymerase II (Pol II), which targets Pol II for proteasomal degradation in DNA-damaged cells. The sequence is that of RING-box protein HRT1 (HRT1) from Saccharomyces cerevisiae (strain ATCC 204508 / S288c) (Baker's yeast).